The sequence spans 288 residues: Bifunctional protein FolD (288 aa).

NADP(+)-binding positions include 166-168 (GAS) and I232.

It belongs to the tetrahydrofolate dehydrogenase/cyclohydrolase family. As to quaternary structure, homodimer.

The enzyme catalyses (6R)-5,10-methylene-5,6,7,8-tetrahydrofolate + NADP(+) = (6R)-5,10-methenyltetrahydrofolate + NADPH. The catalysed reaction is (6R)-5,10-methenyltetrahydrofolate + H2O = (6R)-10-formyltetrahydrofolate + H(+). It participates in one-carbon metabolism; tetrahydrofolate interconversion. Catalyzes the oxidation of 5,10-methylenetetrahydrofolate to 5,10-methenyltetrahydrofolate and then the hydrolysis of 5,10-methenyltetrahydrofolate to 10-formyltetrahydrofolate. In Salmonella heidelberg (strain SL476), this protein is Bifunctional protein FolD.